The following is a 192-amino-acid chain: MYKTNIVFNVLALALFSIFFASCTDMKDESDRGAHSERGALWFGPRLGKRSMKPSTEDNRQTFLRLLEAADALKFYYDQLPYERQADEPETKVTKKIIFTPKLGRSVAKPQTHESLEFIPRLGRRLSEDMPATPADQEMYQPDPEEMESRTRYFSPRLGRTMSFSPRLGRELSYDYPTKYRVARSVNKTMDN.

An N-terminal signal peptide occupies residues 1 to 23; the sequence is MYKTNIVFNVLALALFSIFFASC. L47 carries the post-translational modification Leucine amide. Positions 51 to 94 are excised as a propeptide; sequence SMKPSTEDNRQTFLRLLEAADALKFYYDQLPYERQADEPETKVT. L103, L122, L158, and L168 each carry leucine amide. Positions 171–192 are excised as a propeptide; that stretch reads ELSYDYPTKYRVARSVNKTMDN.

Belongs to the pyrokinin family. In terms of tissue distribution, expression is restricted to the subesophageal ganglion.

Its subcellular location is the secreted. A hormone that controls sex pheromone production in females and pheromone responsiveness in male. Also mediates visceral muscle contractile activity (myotropic activity). Identical to MRCH which is implicated in the formation of both melanin in the cuticle and ommochrome in the epidermis of armyworm species. Its function is as follows. Diapause hormone (DH) is responsible for induction of embryonic diapause. In terms of biological role, the three SGNPS are far less active than DH in inducing diapause eggs. Beta-SGNP expressed higher pban activity than PBAN-I, but alpha- and gamma-SGNP were far less active in pheromonotropic activity. The protein is PBAN-type neuropeptides of Bombyx mori (Silk moth).